Reading from the N-terminus, the 340-residue chain is DNA-directed RNA polymerase subunit alpha (340 aa).

Residues 1 to 233 form an alpha N-terminal domain (alpha-NTD) region; that stretch reads MYRNWRDLIS…EQLSIFINFD (233 aa). The alpha C-terminal domain (alpha-CTD) stretch occupies residues 251 to 340; sequence VNENLYRSVD…RIRGERKDEE (90 aa).

The protein belongs to the RNA polymerase alpha chain family. As to quaternary structure, homodimer. The RNAP catalytic core consists of 2 alpha, 1 beta, 1 beta' and 1 omega subunit. When a sigma factor is associated with the core the holoenzyme is formed, which can initiate transcription.

It carries out the reaction RNA(n) + a ribonucleoside 5'-triphosphate = RNA(n+1) + diphosphate. Its function is as follows. DNA-dependent RNA polymerase catalyzes the transcription of DNA into RNA using the four ribonucleoside triphosphates as substrates. The sequence is that of DNA-directed RNA polymerase subunit alpha from Geobacter metallireducens (strain ATCC 53774 / DSM 7210 / GS-15).